A 204-amino-acid chain; its full sequence is Synaptosomal-associated protein 25-A (204 aa).

Positions 1–11 (MAEDSDMRNEL) are enriched in basic and acidic residues. Positions 1-25 (MAEDSDMRNELADMQQRADQLADES) are disordered. T-SNARE coiled-coil homology domains lie at 19–81 (DQLA…LNDL) and 138–200 (DARE…ATKM).

It belongs to the SNAP-25 family. As to expression, expressed in several regions throughout the adult brain, including the mesencephalon.

The protein localises to the synapse. It localises to the synaptosome. The protein resides in the cell membrane. May play an important role in the synaptic function of specific neuronal systems. Associates with proteins involved in vesicle docking and membrane fusion. This is Synaptosomal-associated protein 25-A from Danio rerio (Zebrafish).